The chain runs to 114 residues: Flagellar hook-basal body complex protein FliE (114 aa).

This sequence belongs to the FliE family.

The protein resides in the bacterial flagellum basal body. This is Flagellar hook-basal body complex protein FliE from Burkholderia vietnamiensis (strain G4 / LMG 22486) (Burkholderia cepacia (strain R1808)).